Reading from the N-terminus, the 92-residue chain is MLCAIYKTKRKEGMYLYIEKRGHFDSVPSSLLESFGKPIFVMLFNLAGQKSLINANNEDVQQQIKQNGFYLQMPKQQENLLEQERQYLKHNK.

The YcgL domain maps to 1 to 85; the sequence is MLCAIYKTKR…QQENLLEQER (85 aa).

The chain is YcgL domain-containing protein HS_0805 from Histophilus somni (strain 129Pt) (Haemophilus somnus).